The sequence spans 384 residues: Toluene efflux pump periplasmic linker protein TtgA (384 aa).

A signal peptide spans Met-1–Gly-22. A lipid anchor (N-palmitoyl cysteine) is attached at Cys-23. Cys-23 carries the S-diacylglycerol cysteine lipid modification. The stretch at Leu-115 to Arg-155 forms a coiled coil. The tract at residues Ala-362–Glu-384 is disordered. Residues Pro-368–Lys-378 show a composition bias toward low complexity.

It belongs to the membrane fusion protein (MFP) (TC 8.A.1) family.

It localises to the cell inner membrane. The periplasmic linker protein component of a constitutive organic solvent efflux system. Involved in export of toluene, styrene, m-xylene, propylbenzene and ethylbenzene. Also exports AMP and the antibiotics carbenicillin, nalidixic acid, chloramphenicol and tetracycline. The polypeptide is Toluene efflux pump periplasmic linker protein TtgA (ttgA) (Pseudomonas putida (strain DOT-T1E)).